The sequence spans 325 residues: Tetraacyldisaccharide 4'-kinase (325 aa).

55-62 serves as a coordination point for ATP; sequence TAGGNGKT.

The protein belongs to the LpxK family.

The catalysed reaction is a lipid A disaccharide + ATP = a lipid IVA + ADP + H(+). It functions in the pathway glycolipid biosynthesis; lipid IV(A) biosynthesis; lipid IV(A) from (3R)-3-hydroxytetradecanoyl-[acyl-carrier-protein] and UDP-N-acetyl-alpha-D-glucosamine: step 6/6. Its function is as follows. Transfers the gamma-phosphate of ATP to the 4'-position of a tetraacyldisaccharide 1-phosphate intermediate (termed DS-1-P) to form tetraacyldisaccharide 1,4'-bis-phosphate (lipid IVA). This Salmonella heidelberg (strain SL476) protein is Tetraacyldisaccharide 4'-kinase.